Consider the following 586-residue polypeptide: Merlin (586 aa).

Residue serine 9 is modified to Phosphoserine. The 290-residue stretch at 18–307 (FTVRIVTMDA…GNHDLFMRRR (290 aa)) folds into the FERM domain. Residues 325-354 (KARKQMERQRLAREKQMREEAERSRDEPER) are disordered. Serine 514 is modified (phosphoserine; by PAK). The disordered stretch occupies residues 557–586 (LHSEHSDSGTSSKHNTIKKPQAQGRRPICI).

In terms of assembly, interacts with NHERF1, HGS and AGAP2. Interacts with SGSM3. Interacts (via FERM domain) with MPP1. Interacts with LAYN and WWC1. Interacts with the CUL4A-RBX1-DDB1-VprBP/DCAF1 E3 ubiquitin-protein ligase complex. The unphosphorylated form interacts (via FERM domain) with VPRBP/DCAF1. Interacts (via FERM domain) with NOP53; the interaction is direct. Interacts with SCHIP1; the interaction is direct. Ubiquitinated by the CUL4A-RBX1-DDB1-DCAF1/VprBP E3 ubiquitin-protein ligase complex for ubiquitination and subsequent proteasome-dependent degradation. In terms of processing, phosphorylation of Ser-514 inhibits nuclear localization by disrupting the intramolecular association of the FERM domain with the C-terminal tail. The dephosphorylation of Ser-514 favors the interaction with NOP53.

The protein resides in the cell membrane. Its subcellular location is the cell projection. It localises to the cytoplasm. The protein localises to the cytoskeleton. It is found in the nucleus. Probable regulator of the Hippo/SWH (Sav/Wts/Hpo) signaling pathway, a signaling pathway that plays a pivotal role in tumor suppression by restricting proliferation and promoting apoptosis. Along with WWC1 can synergistically induce the phosphorylation of LATS1 and LATS2 and can probably function in the regulation of the Hippo/SWH (Sav/Wts/Hpo) signaling pathway. May act as a membrane stabilizing protein. May inhibit PI3 kinase by binding to AGAP2 and impairing its stimulating activity. Suppresses cell proliferation and tumorigenesis by inhibiting the CUL4A-RBX1-DDB1-VprBP/DCAF1 E3 ubiquitin-protein ligase complex Plays a role in lens development and is required for complete fiber cell terminal differentiation, maintenance of cell polarity and separation of the lens vesicle from the corneal epithelium. This Rattus norvegicus (Rat) protein is Merlin (Nf2).